The primary structure comprises 165 residues: AIG2-like protein A (165 aa).

15 to 20 contacts substrate; the sequence is YGSFQD. The Proton acceptor role is filled by Glu-83.

This sequence belongs to the gamma-glutamylcyclotransferase family. Expressed only in seeds.

Its function is as follows. Putative gamma-glutamylcyclotransferase. The sequence is that of AIG2-like protein A from Arabidopsis thaliana (Mouse-ear cress).